The sequence spans 364 residues: Chorismate synthase (364 aa).

R48 and R54 together coordinate NADP(+). Residues 129–131 (RSS), 243–244 (NA), G288, 303–307 (KPTSS), and R329 contribute to the FMN site.

Belongs to the chorismate synthase family. Homotetramer. It depends on FMNH2 as a cofactor.

It carries out the reaction 5-O-(1-carboxyvinyl)-3-phosphoshikimate = chorismate + phosphate. Its pathway is metabolic intermediate biosynthesis; chorismate biosynthesis; chorismate from D-erythrose 4-phosphate and phosphoenolpyruvate: step 7/7. Catalyzes the anti-1,4-elimination of the C-3 phosphate and the C-6 proR hydrogen from 5-enolpyruvylshikimate-3-phosphate (EPSP) to yield chorismate, which is the branch point compound that serves as the starting substrate for the three terminal pathways of aromatic amino acid biosynthesis. This reaction introduces a second double bond into the aromatic ring system. In Chelativorans sp. (strain BNC1), this protein is Chorismate synthase.